A 665-amino-acid polypeptide reads, in one-letter code: Cyclic nucleotide-gated cation channel subunit A (665 aa).

At 1 to 110 the chain is on the cytoplasmic side; the sequence is MRHFKVKAMV…DPTLQSHYRW (110 aa). Residues 111 to 131 form a helical membrane-spanning segment; sequence LAIVSLAVLYNIIFVVGRAVF. At 132–138 the chain is on the extracellular side; it reads WEINKSA. Asn135 carries an N-linked (GlcNAc...) asparagine glycan. A helical membrane pass occupies residues 139 to 159; that stretch reads PAFWYTLDYLCDFIYLLDTLV. Residues 160 to 186 lie on the Cytoplasmic side of the membrane; sequence HMHEGFLDQGLLVRDAFRLRRHYFHTK. A helical membrane pass occupies residues 187-207; that stretch reads GWYLDVLSMLPTDLAYIWWPP. Over 208–253 the chain is Extracellular; that stretch reads ETCSSLYLPCPVIVRLNRLLRINRLWEWFDRTETATGYPNAFRICK. Residues 254–274 traverse the membrane as a helical segment; it reads VVLAILVLIHWNACMYFAISY. Residues 275–325 lie on the Cytoplasmic side of the membrane; it reads EIGFSSDSWVYNLNGTRNNTLQRQYIYSFYWSTLTLTTIGETPTPENDVEY. The helical transmembrane segment at 326–346 threads the bilayer; the sequence is LFVVADFLAGVLIFATIVGNI. The Extracellular segment spans residues 347–481; the sequence is GSMISNMNVA…GKLSVVGDDG (135 aa). 3',5'-cyclic GMP contacts are provided by residues 437–559, Glu496, and Arg511; that span reads LLEA…DGLL. The chain crosses the membrane as a helical span at residues 482–502; the sequence is ITVLATLGAGSVFGEVSVLEI. Residues 503–665 lie on the Cytoplasmic side of the membrane; it reads AGNRTGNRRT…SSDAAKQNTL (163 aa). Residues 633–665 are disordered; the sequence is RSGRLYSLQPKRRPRSRPDATAKSSDAAKQNTL. Over residues 654–665 the composition is skewed to polar residues; it reads AKSSDAAKQNTL.

The protein belongs to the cyclic nucleotide-gated cation channel (TC 1.A.1.5) family. As to expression, expressed in antennae and the visual system.

The protein localises to the membrane. In terms of biological role, approximately 50-fold more sensitive to cGMP than to cAMP. May be involved in transduction cascades of both invertebrate photoreceptors and olfactory sensillae. The sequence is that of Cyclic nucleotide-gated cation channel subunit A (CngA) from Drosophila melanogaster (Fruit fly).